The primary structure comprises 162 residues: SsrA-binding protein (162 aa).

The tract at residues 140–162 (EDRRHDIKERETKREMDRAMRRR) is disordered.

This sequence belongs to the SmpB family.

The protein localises to the cytoplasm. In terms of biological role, required for rescue of stalled ribosomes mediated by trans-translation. Binds to transfer-messenger RNA (tmRNA), required for stable association of tmRNA with ribosomes. tmRNA and SmpB together mimic tRNA shape, replacing the anticodon stem-loop with SmpB. tmRNA is encoded by the ssrA gene; the 2 termini fold to resemble tRNA(Ala) and it encodes a 'tag peptide', a short internal open reading frame. During trans-translation Ala-aminoacylated tmRNA acts like a tRNA, entering the A-site of stalled ribosomes, displacing the stalled mRNA. The ribosome then switches to translate the ORF on the tmRNA; the nascent peptide is terminated with the 'tag peptide' encoded by the tmRNA and targeted for degradation. The ribosome is freed to recommence translation, which seems to be the essential function of trans-translation. This chain is SsrA-binding protein, found in Myxococcus xanthus (strain DK1622).